A 292-amino-acid polypeptide reads, in one-letter code: 4-diphosphocytidyl-2-C-methyl-D-erythritol kinase (292 aa).

K10 is an active-site residue. Position 100–110 (100–110 (PIGSGLGGGSS)) interacts with ATP. D142 is an active-site residue.

This sequence belongs to the GHMP kinase family. IspE subfamily. Homodimer.

It carries out the reaction 4-CDP-2-C-methyl-D-erythritol + ATP = 4-CDP-2-C-methyl-D-erythritol 2-phosphate + ADP + H(+). It functions in the pathway isoprenoid biosynthesis; isopentenyl diphosphate biosynthesis via DXP pathway; isopentenyl diphosphate from 1-deoxy-D-xylulose 5-phosphate: step 3/6. In terms of biological role, catalyzes the phosphorylation of the position 2 hydroxy group of 4-diphosphocytidyl-2C-methyl-D-erythritol. The sequence is that of 4-diphosphocytidyl-2-C-methyl-D-erythritol kinase from Buchnera aphidicola subsp. Schizaphis graminum (strain Sg).